The sequence spans 349 residues: S-adenosylmethionine:tRNA ribosyltransferase-isomerase (349 aa).

The protein belongs to the QueA family. In terms of assembly, monomer.

The protein localises to the cytoplasm. The catalysed reaction is 7-aminomethyl-7-carbaguanosine(34) in tRNA + S-adenosyl-L-methionine = epoxyqueuosine(34) in tRNA + adenine + L-methionine + 2 H(+). It participates in tRNA modification; tRNA-queuosine biosynthesis. Its function is as follows. Transfers and isomerizes the ribose moiety from AdoMet to the 7-aminomethyl group of 7-deazaguanine (preQ1-tRNA) to give epoxyqueuosine (oQ-tRNA). This Ruegeria sp. (strain TM1040) (Silicibacter sp.) protein is S-adenosylmethionine:tRNA ribosyltransferase-isomerase.